A 234-amino-acid polypeptide reads, in one-letter code: Purine nucleoside phosphorylase DeoD-type (234 aa).

His-4 provides a ligand contact to a purine D-ribonucleoside. Phosphate-binding positions include Gly-20, Arg-24, Arg-43, and 87-90 (RVGT). Residues Glu-162, 178–180 (EME), and 202–203 (SD) contribute to the a purine D-ribonucleoside site. Asp-203 functions as the Proton donor in the catalytic mechanism.

This sequence belongs to the PNP/UDP phosphorylase family. In terms of assembly, homohexamer; trimer of homodimers.

The enzyme catalyses a purine D-ribonucleoside + phosphate = a purine nucleobase + alpha-D-ribose 1-phosphate. It carries out the reaction a purine 2'-deoxy-D-ribonucleoside + phosphate = a purine nucleobase + 2-deoxy-alpha-D-ribose 1-phosphate. Functionally, catalyzes the reversible phosphorolytic breakdown of the N-glycosidic bond in the beta-(deoxy)ribonucleoside molecules, with the formation of the corresponding free purine bases and pentose-1-phosphate. Its function is as follows. Cleavage of adenosine and its derivatives. The polypeptide is Purine nucleoside phosphorylase DeoD-type (Geobacillus stearothermophilus (Bacillus stearothermophilus)).